A 122-amino-acid chain; its full sequence is uncharacterized protein (122 aa).

Its subcellular location is the mitochondrion. This is an uncharacterized protein from Arabidopsis thaliana (Mouse-ear cress).